We begin with the raw amino-acid sequence, 99 residues long: Large ribosomal subunit protein uL23 (99 aa).

The protein belongs to the universal ribosomal protein uL23 family. Part of the 50S ribosomal subunit. Contacts protein L29, and trigger factor when it is bound to the ribosome.

One of the early assembly proteins it binds 23S rRNA. One of the proteins that surrounds the polypeptide exit tunnel on the outside of the ribosome. Forms the main docking site for trigger factor binding to the ribosome. In Clavibacter michiganensis subsp. michiganensis (strain NCPPB 382), this protein is Large ribosomal subunit protein uL23.